Consider the following 370-residue polypeptide: ADP-ribosylation factor-like protein 13B (370 aa).

S-palmitoyl cysteine attachment occurs at residues Cys12, Cys13, Cys14, and Cys15. GTP-binding positions include 31–38, 75–79, and 134–137; these read GIGSAGKT, DVGGD, and NNQN. Residue Lys239 forms a Glycyl lysine isopeptide (Lys-Gly) (interchain with G-Cter in SUMO) linkage. Residues 255–331 are disordered; that stretch reads RNQPPVQPPI…PVSPESNSVK (77 aa). Over residues 259 to 271 the composition is skewed to pro residues; that stretch reads PVQPPIPPDPPSD. Composition is skewed to polar residues over residues 287–303 and 314–328; these read LASS…TPET and RISQ…PESN. Residue Lys331 forms a Glycyl lysine isopeptide (Lys-Gly) (interchain with G-Cter in SUMO) linkage. An RVVP region region spans residues 366 to 369; that stretch reads RVVP.

Belongs to the small GTPase superfamily. Arf family. In terms of assembly, monomer. In terms of processing, sumoylation regulates the targeting of membrane sensory receptors to the cilium. As to expression, specifically expressed in ciliated sensory neurons throughout development in both hermaphrodites.

Its subcellular location is the cell projection. It is found in the cilium membrane. Cilium-specific protein required to control the microtubule-based, ciliary axoneme structure. Required for normal sensory cilium function. May act by maintaining the association between IFT subcomplexes A and B. This is ADP-ribosylation factor-like protein 13B (arl-13) from Caenorhabditis elegans.